Here is a 549-residue protein sequence, read N- to C-terminus: Probable protein kinase UbiB (549 aa).

Residues 123–501 (DFDDIPLASA…QQKAHKSNYL (379 aa)) enclose the Protein kinase domain. ATP-binding positions include 129–137 (LASASISQV) and Lys-152. Asp-287 acts as the Proton acceptor in catalysis. The next 2 membrane-spanning stretches (helical) occupy residues 498–518 (SNYLLITSAILVICGTILINQ) and 520–540 (ATLWPSYGSIGTGIALWVLGW).

This sequence belongs to the ABC1 family. UbiB subfamily.

Its subcellular location is the cell inner membrane. Its pathway is cofactor biosynthesis; ubiquinone biosynthesis [regulation]. Its function is as follows. Is probably a protein kinase regulator of UbiI activity which is involved in aerobic coenzyme Q (ubiquinone) biosynthesis. The polypeptide is Probable protein kinase UbiB (Shewanella halifaxensis (strain HAW-EB4)).